We begin with the raw amino-acid sequence, 376 residues long: Queuine tRNA-ribosyltransferase (376 aa).

Asp-89 acts as the Proton acceptor in catalysis. Residues 89–93 (DSGGF), Asp-143, Gln-194, and Gly-221 each bind substrate. The tract at residues 252–258 (GVGTPAN) is RNA binding. Asp-271 acts as the Nucleophile in catalysis. Zn(2+) is bound by residues Cys-309, Cys-311, Cys-314, and His-340.

Belongs to the queuine tRNA-ribosyltransferase family. In terms of assembly, homodimer. Within each dimer, one monomer is responsible for RNA recognition and catalysis, while the other monomer binds to the replacement base PreQ1. Requires Zn(2+) as cofactor.

The catalysed reaction is 7-aminomethyl-7-carbaguanine + guanosine(34) in tRNA = 7-aminomethyl-7-carbaguanosine(34) in tRNA + guanine. It functions in the pathway tRNA modification; tRNA-queuosine biosynthesis. Its function is as follows. Catalyzes the base-exchange of a guanine (G) residue with the queuine precursor 7-aminomethyl-7-deazaguanine (PreQ1) at position 34 (anticodon wobble position) in tRNAs with GU(N) anticodons (tRNA-Asp, -Asn, -His and -Tyr). Catalysis occurs through a double-displacement mechanism. The nucleophile active site attacks the C1' of nucleotide 34 to detach the guanine base from the RNA, forming a covalent enzyme-RNA intermediate. The proton acceptor active site deprotonates the incoming PreQ1, allowing a nucleophilic attack on the C1' of the ribose to form the product. After dissociation, two additional enzymatic reactions on the tRNA convert PreQ1 to queuine (Q), resulting in the hypermodified nucleoside queuosine (7-(((4,5-cis-dihydroxy-2-cyclopenten-1-yl)amino)methyl)-7-deazaguanosine). This chain is Queuine tRNA-ribosyltransferase, found in Clostridium kluyveri (strain NBRC 12016).